Consider the following 868-residue polypeptide: Paladin (868 aa).

A lipid anchor (N-myristoyl glycine) is attached at glycine 2.

It belongs to the paladin family.

It localises to the cytoplasm. It is found in the cytosol. This chain is Paladin (PALD1), found in Gallus gallus (Chicken).